Here is a 509-residue protein sequence, read N- to C-terminus: ATP synthase subunit alpha (509 aa).

169–176 (GDRQTGKT) provides a ligand contact to ATP.

The protein belongs to the ATPase alpha/beta chains family. In terms of assembly, F-type ATPases have 2 components, CF(1) - the catalytic core - and CF(0) - the membrane proton channel. CF(1) has five subunits: alpha(3), beta(3), gamma(1), delta(1), epsilon(1). CF(0) has three main subunits: a(1), b(2) and c(9-12). The alpha and beta chains form an alternating ring which encloses part of the gamma chain. CF(1) is attached to CF(0) by a central stalk formed by the gamma and epsilon chains, while a peripheral stalk is formed by the delta and b chains.

The protein resides in the cell inner membrane. It carries out the reaction ATP + H2O + 4 H(+)(in) = ADP + phosphate + 5 H(+)(out). In terms of biological role, produces ATP from ADP in the presence of a proton gradient across the membrane. The alpha chain is a regulatory subunit. This Zymomonas mobilis subsp. mobilis (strain ATCC 31821 / ZM4 / CP4) protein is ATP synthase subunit alpha.